Consider the following 119-residue polypeptide: Protein TusC (119 aa).

This sequence belongs to the DsrF/TusC family. In terms of assembly, heterohexamer, formed by a dimer of trimers. The hexameric TusBCD complex contains 2 copies each of TusB, TusC and TusD. The TusBCD complex interacts with TusE.

The protein resides in the cytoplasm. Its function is as follows. Part of a sulfur-relay system required for 2-thiolation of 5-methylaminomethyl-2-thiouridine (mnm(5)s(2)U) at tRNA wobble positions. The protein is Protein TusC of Shigella flexneri serotype 5b (strain 8401).